We begin with the raw amino-acid sequence, 35 residues long: Cytochrome b6-f complex subunit 5 (35 aa).

A helical transmembrane segment spans residues 5-25; that stretch reads LLCGIVLGLIPVTLTGLFVAA.

The protein belongs to the PetG family. The 4 large subunits of the cytochrome b6-f complex are cytochrome b6, subunit IV (17 kDa polypeptide, PetD), cytochrome f and the Rieske protein, while the 4 small subunits are PetG, PetL, PetM and PetN. The complex functions as a dimer.

Its subcellular location is the plastid. It localises to the organellar chromatophore thylakoid membrane. Component of the cytochrome b6-f complex, which mediates electron transfer between photosystem II (PSII) and photosystem I (PSI), cyclic electron flow around PSI, and state transitions. PetG is required for either the stability or assembly of the cytochrome b6-f complex. In Paulinella chromatophora, this protein is Cytochrome b6-f complex subunit 5.